Consider the following 513-residue polypeptide: Quiannulatic acid synthase (513 aa).

The chain crosses the membrane as a helical span at residues 14–34 (VFTFCNIILALASLVVAQCVY). A glycan (N-linked (GlcNAc...) asparagine) is linked at Asn308. Cys477 is a binding site for heme.

The protein belongs to the cytochrome P450 family. Heme serves as cofactor.

It is found in the membrane. It carries out the reaction quiannulatene + 3 reduced [NADPH--hemoprotein reductase] + 3 O2 = quiannulatate + 3 oxidized [NADPH--hemoprotein reductase] + 4 H2O + 4 H(+). It participates in secondary metabolite biosynthesis; terpenoid biosynthesis. In terms of biological role, cytochrome P450 monooxygenase; part of the gene cluster that mediates the biosynthesis of the pentacyclic sesterterpene quiannulatic acid. The first step of the pathway is performed by the sesterterpene synthase (QS) that possesses both prenyl transferase and terpene cyclase activity, converting isopentenyl diphosphate and dimethylallyl diphosphate into geranylfarnesyl diphosphate (GFPP) and further converting GFPP into quiannulatene via an unprecedented cyclization mode which involves three rounds of hydride shifts and two successive C-C bond migrations to construct the 5-6-5-5-5 fused ring. The cytochrome P450 monooxygenase Qnn-P450 then oxidizes quiannulatene at C-19 in 3 successive reactions to afford quiannulatic acid. The chain is Quiannulatic acid synthase from Emericella variicolor (Aspergillus stellatus).